The following is a 103-amino-acid chain: Small ribosomal subunit protein uS10 (103 aa).

It belongs to the universal ribosomal protein uS10 family. As to quaternary structure, part of the 30S ribosomal subunit.

Functionally, involved in the binding of tRNA to the ribosomes. The chain is Small ribosomal subunit protein uS10 from Azotobacter vinelandii (strain DJ / ATCC BAA-1303).